Here is a 367-residue protein sequence, read N- to C-terminus: Germination protease (367 aa).

Residues M1–D15 constitute a propeptide that is removed on maturation.

This sequence belongs to the peptidase A25 family. In terms of assembly, homotetramer. Post-translationally, autoproteolytically processed. The inactive tetrameric zymogen termed p46 autoprocesses to a smaller form termed p41, which is active only during spore germination.

The catalysed reaction is Endopeptidase action with P4 Glu or Asp, P1 preferably Glu &gt; Asp, P1' hydrophobic and P2' Ala.. Its function is as follows. Initiates the rapid degradation of small, acid-soluble proteins during spore germination. The polypeptide is Germination protease (Bacillus cereus (strain B4264)).